The following is a 450-amino-acid chain: Tubulin beta-3 chain (450 aa).

8 residues coordinate GTP: Gln-11, Glu-69, Ser-138, Gly-142, Thr-143, Gly-144, Asn-204, and Asn-226. Residue Glu-69 coordinates Mg(2+). A disordered region spans residues 420–450; sequence SEYQQYQDATADEEGDYEDEEEGEYQQEEEY. The segment covering 429 to 450 has biased composition (acidic residues); that stretch reads TADEEGDYEDEEEGEYQQEEEY.

It belongs to the tubulin family. In terms of assembly, dimer of alpha and beta chains. A typical microtubule is a hollow water-filled tube with an outer diameter of 25 nm and an inner diameter of 15 nM. Alpha-beta heterodimers associate head-to-tail to form protofilaments running lengthwise along the microtubule wall with the beta-tubulin subunit facing the microtubule plus end conferring a structural polarity. Microtubules usually have 13 protofilaments but different protofilament numbers can be found in some organisms and specialized cells. It depends on Mg(2+) as a cofactor.

The protein localises to the cytoplasm. It is found in the cytoskeleton. Functionally, tubulin is the major constituent of microtubules, a cylinder consisting of laterally associated linear protofilaments composed of alpha- and beta-tubulin heterodimers. Microtubules grow by the addition of GTP-tubulin dimers to the microtubule end, where a stabilizing cap forms. Below the cap, tubulin dimers are in GDP-bound state, owing to GTPase activity of alpha-tubulin. In Arabidopsis thaliana (Mouse-ear cress), this protein is Tubulin beta-3 chain (TUBB3).